We begin with the raw amino-acid sequence, 114 residues long: Phycoerythrin alpha-1 subunit (114 aa).

9 residues coordinate (2R,3E)-phycoerythrobilin: Asp-52, Ser-53, Glu-63, Arg-64, Cys-67, Thr-72, Lys-74, Ala-75, and Lys-84.

It belongs to the phycoerythrin family. As to quaternary structure, heterotetramer of 2 different alpha chains and 2 identical beta chains which form 2 alpha-beta heterodimers within the heterotetramer. The two alpha-beta heterodimers are rotated to an open configuration in contrast to the closed configuration found in other cryptophyte species due to the insertion of a single amino acid, Asp-65, in a conserved region of the alpha chain. In the open form, the central chromophores are not in physical contact but are separated by a water-filled channel. Post-translationally, contains three phycoerythrobilin chromophores with binding mediated by both the alpha and beta subunits.

The protein resides in the plastid. The protein localises to the chloroplast thylakoid membrane. Light-harvesting photosynthetic tetrapyrrole chromophore-protein from the phycobiliprotein complex. This chain is Phycoerythrin alpha-1 subunit, found in Hemiselmis andersenii (Cryptophyte alga).